Here is an 869-residue protein sequence, read N- to C-terminus: Bifunctional uridylyltransferase/uridylyl-removing enzyme (869 aa).

The tract at residues 1–332 is uridylyltransferase; sequence MTATPADRPD…QFDGEAVPVQ (332 aa). The interval 333 to 691 is uridylyl-removing; sequence LDAGFSLRRG…RRAVPDNDAL (359 aa). In terms of domain architecture, HD spans 450–572; sequence VDQHTLMVLR…VGTRERLDYL (123 aa). ACT domains follow at residues 692–771 and 798–869; these read EVFV…PSRR and RISL…LDPT.

It belongs to the GlnD family. The cofactor is Mg(2+).

The catalysed reaction is [protein-PII]-L-tyrosine + UTP = [protein-PII]-uridylyl-L-tyrosine + diphosphate. It carries out the reaction [protein-PII]-uridylyl-L-tyrosine + H2O = [protein-PII]-L-tyrosine + UMP + H(+). Its activity is regulated as follows. Uridylyltransferase (UTase) activity is inhibited by glutamine, while glutamine activates uridylyl-removing (UR) activity. Its function is as follows. Modifies, by uridylylation and deuridylylation, the PII regulatory proteins (GlnB and homologs), in response to the nitrogen status of the cell that GlnD senses through the glutamine level. Under low glutamine levels, catalyzes the conversion of the PII proteins and UTP to PII-UMP and PPi, while under higher glutamine levels, GlnD hydrolyzes PII-UMP to PII and UMP (deuridylylation). Thus, controls uridylylation state and activity of the PII proteins, and plays an important role in the regulation of nitrogen assimilation and metabolism. This chain is Bifunctional uridylyltransferase/uridylyl-removing enzyme, found in Xanthomonas campestris pv. campestris (strain 8004).